A 361-amino-acid polypeptide reads, in one-letter code: Mannose-1-phosphate guanyltransferase (361 aa).

Threonine 153 is subject to Phosphothreonine. A Glycyl lysine isopeptide (Lys-Gly) (interchain with G-Cter in ubiquitin) cross-link involves residue lysine 244.

The protein belongs to the transferase hexapeptide repeat family.

Its subcellular location is the cytoplasm. The catalysed reaction is alpha-D-mannose 1-phosphate + GTP + H(+) = GDP-alpha-D-mannose + diphosphate. It participates in nucleotide-sugar biosynthesis; GDP-alpha-D-mannose biosynthesis; GDP-alpha-D-mannose from alpha-D-mannose 1-phosphate (GTP route): step 1/1. Functionally, involved in cell wall synthesis where it is required for glycosylation. Involved in cell cycle progression through cell-size checkpoint. This Saccharomyces cerevisiae (strain ATCC 204508 / S288c) (Baker's yeast) protein is Mannose-1-phosphate guanyltransferase (PSA1).